An 85-amino-acid polypeptide reads, in one-letter code: Selenoprotein W (85 aa).

The cysteinyl-selenocysteine (Cys-Sec); redox-active cross-link spans 10–13; that stretch reads CGAU. Position 13 (U13) is a non-standard amino acid, selenocysteine.

The protein belongs to the SelWTH family. Selenoprotein W subfamily. Expressed ubiquitously with predominant expression in the pituitary, spinal cord, sciatic nerve, cerebral cortex, cerebral nuclei, thalamus, cerebellum, muscle, cartilage, trachea, gizzard and artery. Weakly expressed in pancreas, testis, ovary, kidney and veins.

The protein resides in the cytoplasm. Plays a role as a glutathione (GSH)-dependent antioxidant. May be involved in a redox-related process. May play a role in the myopathies of selenium deficiency. The polypeptide is Selenoprotein W (Gallus gallus (Chicken)).